The primary structure comprises 388 residues: MGRVGVLLLNLGGPDKLEDVGPFLFNLFSDPEIIRLPFRWLQKPLAWFIASRRTKTSQENYKQIGGGSPLRRITEAQGEALKEQLHDLGQEANIYVGMRYWHPYTEEAIALLTQDNLDNLVILPLYPQFSISTSGSSFRLLERLWQEDPKLQRLDYTVIPSWYKEPCYLQAMAELISQEVDQFPDPDQVHVFFSAHGVPKSYVEEAGDPYQQEIEECTALIMQTLNRPNPHTLAYQSRVGPVEWLQPYTEDALKELGAQGVKDLVVVPISFVSEHIETLQEIDIEYREIAEEAGIHNFRRVAAPNTHPVFIRALANLVIDALNKPSFKLSQAAQIKKMVKMYPPESWEWGMTSSAEVWNGRIAMLGFIALIIELVTGQGLLHMIGLLQ.

Fe cation contacts are provided by His-196 and Glu-277.

This sequence belongs to the ferrochelatase family.

It localises to the cytoplasm. It catalyses the reaction heme b + 2 H(+) = protoporphyrin IX + Fe(2+). It participates in porphyrin-containing compound metabolism; protoheme biosynthesis; protoheme from protoporphyrin-IX: step 1/1. In terms of biological role, catalyzes the ferrous insertion into protoporphyrin IX. The protein is Ferrochelatase of Trichormus variabilis (strain ATCC 29413 / PCC 7937) (Anabaena variabilis).